The primary structure comprises 239 residues: Probable transcriptional regulatory protein YeeI (239 aa).

The protein belongs to the TACO1 family. YeeN subfamily.

It is found in the cytoplasm. This Bacillus subtilis (strain 168) protein is Probable transcriptional regulatory protein YeeI (yeeI).